A 121-amino-acid chain; its full sequence is Phosphoribosyl-ATP pyrophosphatase (121 aa).

The protein belongs to the PRA-PH family.

The protein resides in the cytoplasm. The enzyme catalyses 1-(5-phospho-beta-D-ribosyl)-ATP + H2O = 1-(5-phospho-beta-D-ribosyl)-5'-AMP + diphosphate + H(+). Its pathway is amino-acid biosynthesis; L-histidine biosynthesis; L-histidine from 5-phospho-alpha-D-ribose 1-diphosphate: step 2/9. The sequence is that of Phosphoribosyl-ATP pyrophosphatase from Burkholderia vietnamiensis (strain G4 / LMG 22486) (Burkholderia cepacia (strain R1808)).